The following is a 39-amino-acid chain: Potassium channel toxin alpha-KTx 2.5 (39 aa).

3 disulfide bridges follow: cysteine 7-cysteine 29, cysteine 13-cysteine 34, and cysteine 17-cysteine 36.

This sequence belongs to the short scorpion toxin superfamily. Potassium channel inhibitor family. Alpha-KTx 02 subfamily. In terms of tissue distribution, expressed by the venom gland.

It localises to the secreted. Its function is as follows. Potent selective inhibitor of Kv1.1/KCNA1, Kv1.2/KCNA2, Kv1.3/KCNA3 voltage-gated potassium channels. Weak inhibitor of Kv1.6/KCNA6 potassium channel. It also shows a weak interaction with nicotinic acetylcholine receptors (nAChR), suggesting it may weakly inhibit it. This Centruroides limbatus (Bark scorpion) protein is Potassium channel toxin alpha-KTx 2.5.